Reading from the N-terminus, the 338-residue chain is Large ribosomal subunit protein uL3 (338 aa).

Disordered regions lie at residues His-230–Gln-256 and Pro-315–Pro-338.

The protein belongs to the universal ribosomal protein uL3 family. Part of the 50S ribosomal subunit. Forms a cluster with proteins L14 and L24e.

Its function is as follows. One of the primary rRNA binding proteins, it binds directly near the 3'-end of the 23S rRNA, where it nucleates assembly of the 50S subunit. The sequence is that of Large ribosomal subunit protein uL3 from Pyrobaculum arsenaticum (strain DSM 13514 / JCM 11321 / PZ6).